A 215-amino-acid polypeptide reads, in one-letter code: Pyrrolidone-carboxylate peptidase (215 aa).

Residues E80, C143, and H167 contribute to the active site.

Belongs to the peptidase C15 family. In terms of assembly, homotetramer.

It is found in the cytoplasm. The catalysed reaction is Release of an N-terminal pyroglutamyl group from a polypeptide, the second amino acid generally not being Pro.. Removes 5-oxoproline from various penultimate amino acid residues except L-proline. This is Pyrrolidone-carboxylate peptidase from Bacillus cereus (strain G9842).